The primary structure comprises 310 residues: Homoserine kinase (310 aa).

Residue 91 to 101 coordinates ATP; the sequence is PIGSGLGSSAC.

This sequence belongs to the GHMP kinase family. Homoserine kinase subfamily.

It localises to the cytoplasm. The enzyme catalyses L-homoserine + ATP = O-phospho-L-homoserine + ADP + H(+). It functions in the pathway amino-acid biosynthesis; L-threonine biosynthesis; L-threonine from L-aspartate: step 4/5. Its function is as follows. Catalyzes the ATP-dependent phosphorylation of L-homoserine to L-homoserine phosphate. This chain is Homoserine kinase, found in Shigella flexneri serotype 5b (strain 8401).